The primary structure comprises 739 residues: Vascular cell adhesion protein 1 (739 aa).

Positions methionine 1 to alanine 24 are cleaved as a signal peptide. Ig-like C2-type domains lie at phenylalanine 25–glutamate 105, glutamine 109–glutamine 212, proline 223–glutamine 309, proline 312–glutamate 399, glutamate 408–tyrosine 506, proline 511–isoleucine 595, and proline 600–aspartate 684. At phenylalanine 25–glutamate 698 the chain is on the extracellular side. 5 disulfide bridges follow: cysteine 47–cysteine 95, cysteine 52–cysteine 99, cysteine 137–cysteine 195, cysteine 246–cysteine 291, and cysteine 335–cysteine 383. N-linked (GlcNAc...) asparagine glycans are attached at residues asparagine 273, asparagine 365, asparagine 417, asparagine 463, asparagine 531, and asparagine 561. Cysteines 534 and 579 form a disulfide. A helical membrane pass occupies residues leucine 699–alanine 720. Residues arginine 721–valine 739 lie on the Cytoplasmic side of the membrane.

Cleaved by the metalloproteinase ADAM17 to generate the soluble form. In terms of processing, sialoglycoprotein. Post-translationally, ubiquitinated by TRIM65 via 'Lys-48'-linked ubiquitination; leading to proteasomal degradation. Expressed on inflamed vascular endothelium, as well as on macrophage-like and dendritic cell types in both normal and inflamed tissue.

It localises to the cell membrane. The protein localises to the secreted. Its function is as follows. Cell adhesion glycoprotein predominantly expressed on the surface of endothelial cells that plays an important role in immune surveillance and inflammation. Acts as a major regulator of leukocyte adhesion to the endothelium through interaction with different types of integrins. During inflammatory responses, binds ligands on the surface of activated endothelial cells to initiate the activation of calcium channels and the plasma membrane-associated small GTPase RAC1 leading to leukocyte transendothelial migration. Also serves as a quality-control checkpoint for entry into bone marrow by providing a 'don't-eat-me' stamping in the context of major histocompatibility complex (MHC) class-I presentation. The protein is Vascular cell adhesion protein 1 (VCAM1) of Homo sapiens (Human).